The primary structure comprises 234 residues: Purine nucleoside phosphorylase DeoD-type (234 aa).

His-4 contacts a purine D-ribonucleoside. Phosphate contacts are provided by residues Gly-20, Arg-24, Arg-43, and 87-90 (RIGS). A purine D-ribonucleoside contacts are provided by residues 179-181 (DME) and 203-204 (SD). Asp-204 functions as the Proton donor in the catalytic mechanism.

Belongs to the PNP/UDP phosphorylase family. Homohexamer; trimer of homodimers.

The catalysed reaction is a purine D-ribonucleoside + phosphate = a purine nucleobase + alpha-D-ribose 1-phosphate. It catalyses the reaction a purine 2'-deoxy-D-ribonucleoside + phosphate = a purine nucleobase + 2-deoxy-alpha-D-ribose 1-phosphate. Functionally, catalyzes the reversible phosphorolytic breakdown of the N-glycosidic bond in the beta-(deoxy)ribonucleoside molecules, with the formation of the corresponding free purine bases and pentose-1-phosphate. This chain is Purine nucleoside phosphorylase DeoD-type, found in Shewanella oneidensis (strain ATCC 700550 / JCM 31522 / CIP 106686 / LMG 19005 / NCIMB 14063 / MR-1).